Consider the following 167-residue polypeptide: Leptin (167 aa).

The N-terminal stretch at 1-21 (MRCGPLYQFLWLWPYLSYVEA) is a signal peptide. The cysteines at positions 117 and 167 are disulfide-linked.

It belongs to the leptin family.

Its subcellular location is the secreted. In terms of biological role, key player in the regulation of energy balance and body weight control. Once released into the circulation, has central and peripheral effects by binding LEPR, found in many tissues, which results in the activation of several major signaling pathways. In the hypothalamus, acts as an appetite-regulating factor that induces a decrease in food intake and an increase in energy consumption by inducing anorexinogenic factors and suppressing orexigenic neuropeptides, also regulates bone mass and secretion of hypothalamo-pituitary-adrenal hormones. In the periphery, increases basal metabolism, influences reproductive function, regulates pancreatic beta-cell function and insulin secretion, is pro-angiogenic for endothelial cell and affects innate and adaptive immunity. In the arcuate nucleus of the hypothalamus, activates by depolarization POMC neurons inducing FOS and SOCS3 expression to release anorexigenic peptides and inhibits by hyperpolarization NPY neurons inducing SOCS3 with a consequent reduction on release of orexigenic peptides. In addition to its known satiety inducing effect, has a modulatory role in nutrient absorption. In the intestine, reduces glucose absorption by enterocytes by activating PKC and leading to a sequential activation of p38, PI3K and ERK signaling pathways which exerts an inhibitory effect on glucose absorption. Acts as a growth factor on certain tissues, through the activation of different signaling pathways increases expression of genes involved in cell cycle regulation such as CCND1, via JAK2-STAT3 pathway, or VEGFA, via MAPK1/3 and PI3K-AKT1 pathways. May also play an apoptotic role via JAK2-STAT3 pathway and up-regulation of BIRC5 expression. Pro-angiogenic, has mitogenic activity on vascular endothelial cells and plays a role in matrix remodeling by regulating the expression of matrix metalloproteinases (MMPs) and tissue inhibitors of metalloproteinases (TIMPs). In innate immunity, modulates the activity and function of neutrophils by increasing chemotaxis and the secretion of oxygen radicals. Increases phagocytosis by macrophages and enhances secretion of pro-inflammatory mediators. Increases cytotoxic ability of NK cells. Plays a pro-inflammatory role, in synergy with IL1B, by inducing NOS2 which promotes the production of IL6, IL8 and Prostaglandin E2, through a signaling pathway that involves JAK2, PI3K, MAP2K1/MEK1 and MAPK14/p38. In adaptive immunity, promotes the switch of memory T-cells towards T helper-1 cell immune responses. Increases CD4(+)CD25(-) T-cell proliferation and reduces autophagy during TCR (T-cell receptor) stimulation, through MTOR signaling pathway activation and BCL2 up-regulation. The sequence is that of Leptin (LEP) from Bubalus bubalis (Domestic water buffalo).